The sequence spans 265 residues: Mlc titration factor A (265 aa).

Positions 111, 148, 152, and 211 each coordinate Zn(2+).

Belongs to the MtfA family. Interacts with Mlc. Zn(2+) is required as a cofactor.

It localises to the cytoplasm. In terms of biological role, involved in the modulation of the activity of the glucose-phosphotransferase system (glucose-PTS). Interacts with the transcriptional repressor Mlc, preventing its interaction with DNA and leading to the modulation of expression of genes regulated by Mlc, including ptsG, which encodes the PTS system glucose-specific EIICB component. Functionally, shows zinc-dependent metallopeptidase activity. This is Mlc titration factor A from Shigella dysenteriae serotype 1 (strain Sd197).